The sequence spans 473 residues: MATTNYSMIFIGNLQVAVDRSSLYESSDYSSFVARECLNKDSAMKPYDIFIFEKDEHFSVEDHYTAGNSSNESNTRPSDIFLKKKLVGLNPSILQLNREKRKATLKFSGDNKDILQSTLSSSKNINLSGGLFVSREYENKYVKFGARMRCDLVNRMKDVTLAWHESVSSTSDKNVELSSVENHKIAPKADGPGNSSNESSSSPFDIFLKKKVMRLKPSFLELNREKKKAAKGFSGIVIRPGMVLLKNYLSINNQVMIVNKCRQLGLGEGGFYQPGFQDGGLLHLKMMCLGKNWDCQTRRYGEIRPIDGSVPPRIPVEFSQLVEKAIKESKSLVATNSNETKGGDEIPLLLPDICVVNFYTSTGKLGLHQVSVYDKTSFDFLKYKGGYLNTDKGESKKSLRKGLPIVSFSIGDSAEFLYGDQKDVDKADTLILESGDVLIFGERSRNVFHGVRSIRKILPPRLFFRKQIFNQVV.

2-oxoglutarate is bound at residue 357–359; the sequence is NFY. Residues His-368, Asp-391, and His-449 each coordinate Fe cation. 461–465 lines the 2-oxoglutarate pocket; it reads RLFFR.

This sequence belongs to the alkB family. Fe(2+) is required as a cofactor. In terms of tissue distribution, undetectable.

The catalysed reaction is an N(6)-methyl-2'-deoxyadenosine in DNA + 2-oxoglutarate + O2 = a 2'-deoxyadenosine in DNA + formaldehyde + succinate + CO2. Functionally, dioxygenase that may catalyzes DNA N(6)-methyladenine (6 mA) demethylation. Requires molecular oxygen, alpha-ketoglutarate and iron. The chain is Probable DNA N(6)-methyladenine demethylase ALKBH1B from Arabidopsis thaliana (Mouse-ear cress).